A 448-amino-acid polypeptide reads, in one-letter code: Dual specificity mitogen-activated protein kinase kinase 5 (448 aa).

An interaction with MAPK7 region spans residues 18 to 25; sequence VIRIKIPN. Residues 18–109 enclose the PB1 domain; the sequence is VIRIKIPNSG…EPLQIFPRAC (92 aa). The interval 64-68 is interaction with MAP3K2/MAP3K3; it reads DEDGD. Residues 116 to 144 form a disordered region; sequence NIHGLKVNTRAGPSQHSSPAVSDSLPSNS. An interaction with MAPK7 region spans residues 117-131; it reads IHGLKVNTRAGPSQH. The span at 126 to 144 shows a compositional bias: polar residues; sequence AGPSQHSSPAVSDSLPSNS. Residues 166 to 409 enclose the Protein kinase domain; sequence IRYRDTLGHG…MRKQPKERPA (244 aa). ATP-binding positions include 172 to 180 and Lys195; that span reads LGHGNGGTV. The active-site Proton acceptor is the Asp283. Ser311 carries the phosphoserine modification. The residue at position 315 (Thr315) is a Phosphothreonine.

This sequence belongs to the protein kinase superfamily. STE Ser/Thr protein kinase family. MAP kinase kinase subfamily. In terms of assembly, interacts with PARD6A, MAP3K3 and MAPK7. Forms a complex with SQSTM1 and PRKCZ or PRKCI. As to quaternary structure, (Microbial infection) Interacts with Yersinia YopJ. Requires Mg(2+) as cofactor. In terms of processing, activated by phosphorylation on Ser/Thr by MAP kinase kinase kinases. Post-translationally, (Microbial infection) Yersinia YopJ may acetylate Ser/Thr residues, preventing phosphorylation and activation, thus blocking the MAPK signaling pathway. In terms of tissue distribution, expressed in many adult tissues. Abundant in heart and skeletal muscle.

It carries out the reaction L-seryl-[protein] + ATP = O-phospho-L-seryl-[protein] + ADP + H(+). It catalyses the reaction L-threonyl-[protein] + ATP = O-phospho-L-threonyl-[protein] + ADP + H(+). The enzyme catalyses L-tyrosyl-[protein] + ATP = O-phospho-L-tyrosyl-[protein] + ADP + H(+). In terms of biological role, acts as a scaffold for the formation of a ternary MAP3K2/MAP3K3-MAP3K5-MAPK7 signaling complex. Activation of this pathway appears to play a critical role in protecting cells from stress-induced apoptosis, neuronal survival and cardiac development and angiogenesis. As part of the MAPK/ERK signaling pathway, acts as a negative regulator of apoptosis in cardiomyocytes via promotion of STUB1/CHIP-mediated ubiquitination and degradation of ICER-type isoforms of CREM. The sequence is that of Dual specificity mitogen-activated protein kinase kinase 5 (MAP2K5) from Homo sapiens (Human).